Reading from the N-terminus, the 378-residue chain is Chaperone protein DnaJ (378 aa).

Residues 5–70 (DYYQILGIPK…EKRTAYDQYG (66 aa)) form the J domain. A CR-type zinc finger spans residues 133-211 (GTTKEIRIPT…CRGQGRIKTN (79 aa)). Positions 146, 149, 163, 166, 185, 188, 199, and 202 each coordinate Zn(2+). CXXCXGXG motif repeat units follow at residues 146-153 (CKTCYGMG), 163-170 (CSTCHGKG), 185-192 (CPTCNGIG), and 199-206 (CRMCRGQG).

This sequence belongs to the DnaJ family. In terms of assembly, homodimer. Requires Zn(2+) as cofactor.

It is found in the cytoplasm. Functionally, participates actively in the response to hyperosmotic and heat shock by preventing the aggregation of stress-denatured proteins and by disaggregating proteins, also in an autonomous, DnaK-independent fashion. Unfolded proteins bind initially to DnaJ; upon interaction with the DnaJ-bound protein, DnaK hydrolyzes its bound ATP, resulting in the formation of a stable complex. GrpE releases ADP from DnaK; ATP binding to DnaK triggers the release of the substrate protein, thus completing the reaction cycle. Several rounds of ATP-dependent interactions between DnaJ, DnaK and GrpE are required for fully efficient folding. Also involved, together with DnaK and GrpE, in the DNA replication of plasmids through activation of initiation proteins. In Buchnera aphidicola subsp. Schizaphis graminum (strain Sg), this protein is Chaperone protein DnaJ.